We begin with the raw amino-acid sequence, 118 residues long: Large ribosomal subunit protein bL20 (118 aa).

This sequence belongs to the bacterial ribosomal protein bL20 family.

In terms of biological role, binds directly to 23S ribosomal RNA and is necessary for the in vitro assembly process of the 50S ribosomal subunit. It is not involved in the protein synthesizing functions of that subunit. In Thermotoga maritima (strain ATCC 43589 / DSM 3109 / JCM 10099 / NBRC 100826 / MSB8), this protein is Large ribosomal subunit protein bL20 (rplT).